The chain runs to 105 residues: Small ribosomal subunit protein uS10 (105 aa).

Belongs to the universal ribosomal protein uS10 family. Part of the 30S ribosomal subunit.

Its function is as follows. Involved in the binding of tRNA to the ribosomes. The protein is Small ribosomal subunit protein uS10 of Trichodesmium erythraeum (strain IMS101).